Here is a 177-residue protein sequence, read N- to C-terminus: Large ribosomal subunit protein uL6 (177 aa).

The protein belongs to the universal ribosomal protein uL6 family. As to quaternary structure, part of the 50S ribosomal subunit.

In terms of biological role, this protein binds to the 23S rRNA, and is important in its secondary structure. It is located near the subunit interface in the base of the L7/L12 stalk, and near the tRNA binding site of the peptidyltransferase center. The chain is Large ribosomal subunit protein uL6 from Ectopseudomonas mendocina (strain ymp) (Pseudomonas mendocina).